The following is a 137-amino-acid chain: Large ribosomal subunit protein eL28 (137 aa).

Ser2 carries the post-translational modification N-acetylserine. Residues Lys58 and Lys65 each participate in a glycyl lysine isopeptide (Lys-Gly) (interchain with G-Cter in SUMO2) cross-link. Phosphoserine is present on Ser115.

This sequence belongs to the eukaryotic ribosomal protein eL28 family. As to quaternary structure, component of the large ribosomal subunit.

It is found in the cytoplasm. Its function is as follows. Component of the large ribosomal subunit. The ribosome is a large ribonucleoprotein complex responsible for the synthesis of proteins in the cell. The chain is Large ribosomal subunit protein eL28 (Rpl28) from Mus musculus (Mouse).